A 156-amino-acid chain; its full sequence is Ribosomal RNA large subunit methyltransferase H (156 aa).

Residues Leu-73, Gly-104, and 123–128 (ISSMTL) contribute to the S-adenosyl-L-methionine site.

The protein belongs to the RNA methyltransferase RlmH family. In terms of assembly, homodimer.

Its subcellular location is the cytoplasm. The enzyme catalyses pseudouridine(1915) in 23S rRNA + S-adenosyl-L-methionine = N(3)-methylpseudouridine(1915) in 23S rRNA + S-adenosyl-L-homocysteine + H(+). In terms of biological role, specifically methylates the pseudouridine at position 1915 (m3Psi1915) in 23S rRNA. The chain is Ribosomal RNA large subunit methyltransferase H from Burkholderia cenocepacia (strain HI2424).